We begin with the raw amino-acid sequence, 305 residues long: Protein EXORDIUM-like 2 (305 aa).

The N-terminal stretch at 1-23 is a signal peptide; sequence MASNYRFAIFLTLFFATAGFSAA. Asparagine 44 carries N-linked (GlcNAc...) asparagine glycosylation.

This sequence belongs to the EXORDIUM family.

It is found in the secreted. The protein localises to the extracellular space. Its subcellular location is the apoplast. In terms of biological role, may play a role in a brassinosteroid-dependent regulation of growth and development. The sequence is that of Protein EXORDIUM-like 2 (EXL2) from Arabidopsis thaliana (Mouse-ear cress).